Here is a 310-residue protein sequence, read N- to C-terminus: D-alanine--D-alanine ligase (310 aa).

Positions 105–301 constitute an ATP-grasp domain; sequence KQAFVSAGIL…FEELVERIIL (197 aa). 133–186 lines the ATP pocket; that stretch reads SFGLPLVVKPVQEGSSVGISIVKEESQLAAAVKLAFRHDDEILVEQFIKGQEVQ. Positions 254, 267, and 269 each coordinate Mg(2+).

This sequence belongs to the D-alanine--D-alanine ligase family. Requires Mg(2+) as cofactor. Mn(2+) serves as cofactor.

It is found in the cytoplasm. It carries out the reaction 2 D-alanine + ATP = D-alanyl-D-alanine + ADP + phosphate + H(+). The protein operates within cell wall biogenesis; peptidoglycan biosynthesis. Cell wall formation. The protein is D-alanine--D-alanine ligase of Pelobacter propionicus (strain DSM 2379 / NBRC 103807 / OttBd1).